The following is a 404-amino-acid chain: Multidrug resistance protein MdtG (404 aa).

11 consecutive transmembrane segments (helical) span residues 19 to 39, 56 to 76, 90 to 110, 113 to 133, 144 to 164, 171 to 191, 222 to 242, 254 to 274, 288 to 308, 317 to 337, and 376 to 396; these read LGCF…PLYV, LVFS…GGLA, LGMA…QFLI, ALLG…ATQV, TLST…GLLA, PVFF…FFFI, LFVT…ILTL, IAFI…LSAP, ILIV…FVQT, FLLG…LVYN, and AVFC…WNSL.

The protein belongs to the major facilitator superfamily. DHA1 family. MdtG (TC 2.A.1.2.20) subfamily.

The protein resides in the cell inner membrane. In Salmonella dublin (strain CT_02021853), this protein is Multidrug resistance protein MdtG.